The sequence spans 902 residues: Protein translocase subunit SecA (902 aa).

ATP is bound by residues Q87, 105 to 109, and D512; that span reads GEGKT. 2 disordered regions span residues 565-584 and 840-902; these read RRID…PGSS and VEEQ…GKLK. Composition is skewed to basic and acidic residues over residues 840–859 and 873–882; these read VEEQ…HEDA and QVREGAKVGR. 4 residues coordinate Zn(2+): C886, C888, C897, and H898. Positions 892 to 902 are enriched in basic residues; the sequence is KKYKQCHGKLK.

The protein belongs to the SecA family. As to quaternary structure, monomer and homodimer. Part of the essential Sec protein translocation apparatus which comprises SecA, SecYEG and auxiliary proteins SecDF-YajC and YidC. Requires Zn(2+) as cofactor.

It is found in the cell inner membrane. The protein localises to the cytoplasm. The catalysed reaction is ATP + H2O + cellular proteinSide 1 = ADP + phosphate + cellular proteinSide 2.. Part of the Sec protein translocase complex. Interacts with the SecYEG preprotein conducting channel. Has a central role in coupling the hydrolysis of ATP to the transfer of proteins into and across the cell membrane, serving both as a receptor for the preprotein-SecB complex and as an ATP-driven molecular motor driving the stepwise translocation of polypeptide chains across the membrane. The polypeptide is Protein translocase subunit SecA (Alteromonas mediterranea (strain DSM 17117 / CIP 110805 / LMG 28347 / Deep ecotype)).